The chain runs to 202 residues: Guanylate kinase (202 aa).

A Guanylate kinase-like domain is found at 3-181 (GNLFVVAAPS…ALDDLRAVVR (179 aa)). 10–17 (APSGAGKT) lines the ATP pocket.

The protein belongs to the guanylate kinase family.

Its subcellular location is the cytoplasm. The catalysed reaction is GMP + ATP = GDP + ADP. In terms of biological role, essential for recycling GMP and indirectly, cGMP. The polypeptide is Guanylate kinase (Dechloromonas aromatica (strain RCB)).